The primary structure comprises 415 residues: NAD-dependent protein deacetylase hst4 (415 aa).

The tract at residues 1-26 is disordered; that stretch reads MKVEEHVPLIQESRKRKCQSSENASK. Residues 40–337 enclose the Deacetylase sirtuin-type domain; the sequence is TGNENVDLSP…RRLKPLLDAP (298 aa). NAD(+) contacts are provided by residues 65–84 and 153–156; these read GAGISCDAGIPDFRSSEGLF and QNID. The Proton acceptor role is filled by H184. Zn(2+) contacts are provided by C192, C195, C214, and C217. NAD(+)-binding positions include 273–275, 303–305, and L323; these read GTS and NYD.

The protein belongs to the sirtuin family. Class I subfamily. Zn(2+) serves as cofactor.

It is found in the nucleus. The protein resides in the nucleolus. The enzyme catalyses N(6)-acetyl-L-lysyl-[protein] + NAD(+) + H2O = 2''-O-acetyl-ADP-D-ribose + nicotinamide + L-lysyl-[protein]. NAD-dependent histone deacetylase, which contributes to both telomeric and centromeric silencing, proper cell cycle progression, DNA damage control, recombination, and genomic maintenance. The protein is NAD-dependent protein deacetylase hst4 (hst4) of Schizosaccharomyces pombe (strain 972 / ATCC 24843) (Fission yeast).